The following is a 359-amino-acid chain: Histidinol-phosphate aminotransferase (359 aa).

N6-(pyridoxal phosphate)lysine is present on lysine 217.

It belongs to the class-II pyridoxal-phosphate-dependent aminotransferase family. Histidinol-phosphate aminotransferase subfamily. As to quaternary structure, homodimer. Requires pyridoxal 5'-phosphate as cofactor.

It carries out the reaction L-histidinol phosphate + 2-oxoglutarate = 3-(imidazol-4-yl)-2-oxopropyl phosphate + L-glutamate. Its pathway is amino-acid biosynthesis; L-histidine biosynthesis; L-histidine from 5-phospho-alpha-D-ribose 1-diphosphate: step 7/9. The protein is Histidinol-phosphate aminotransferase of Salmonella newport (strain SL254).